The sequence spans 178 residues: Large ribosomal subunit protein uL6 (178 aa).

This sequence belongs to the universal ribosomal protein uL6 family. In terms of assembly, part of the 50S ribosomal subunit.

This protein binds to the 23S rRNA, and is important in its secondary structure. It is located near the subunit interface in the base of the L7/L12 stalk, and near the tRNA binding site of the peptidyltransferase center. The sequence is that of Large ribosomal subunit protein uL6 from Methanobrevibacter smithii (strain ATCC 35061 / DSM 861 / OCM 144 / PS).